The sequence spans 331 residues: Very-long-chain 3-oxoacyl-CoA reductase (331 aa).

A helical membrane pass occupies residues 15–35; the sequence is VQWALAGVGALYISAKVLSYL. Residues V60, D115, D123, N142, Y209, K213, I242, and S244 each coordinate NADP(+). The Proton donor role is filled by Y209. The Lowers pKa of active site Tyr role is filled by K213.

This sequence belongs to the short-chain dehydrogenases/reductases (SDR) family.

It localises to the endoplasmic reticulum membrane. It carries out the reaction a very-long-chain (3R)-3-hydroxyacyl-CoA + NADP(+) = a very-long-chain 3-oxoacyl-CoA + NADPH + H(+). It functions in the pathway lipid metabolism; fatty acid biosynthesis. Its function is as follows. Component of the microsomal membrane bound fatty acid elongation system, which produces the 26-carbon very long-chain fatty acids (VLCFA) from palmitate. Catalyzes the reduction of the 3-ketoacyl-CoA intermediate that is formed in each cycle of fatty acid elongation. VLCFAs serve as precursors for ceramide and sphingolipids. The protein is Very-long-chain 3-oxoacyl-CoA reductase of Pyricularia oryzae (strain 70-15 / ATCC MYA-4617 / FGSC 8958) (Rice blast fungus).